Here is an 86-residue protein sequence, read N- to C-terminus: MSEIKLKYDTVIKTLDSVKDALADVSIGAAGSNGKNSLDYTKKYHEREENIKTMLGDYKKAVQKNIEDTKDNVDSLKEQDEAIAVK.

The stretch at 57 to 83 forms a coiled coil; it reads DYKKAVQKNIEDTKDNVDSLKEQDEAI.

This chain is Protein YwqI (ywqI), found in Bacillus subtilis (strain 168).